The primary structure comprises 151 residues: Putative calcium-binding protein CML23 (151 aa).

EF-hand domains are found at residues 2–37 (VASD…SLGE), 39–74 (MPDE…MEAD), 84–119 (ETCR…LGTH), and 120–151 (LDVA…MMMA). Residues Asp15, Asp17, Asp19, Lys21, Glu26, Asp52, Asp54, Asp56, and Glu63 each coordinate Ca(2+). Ca(2+)-binding residues include Asp133, Asn135, Asp137, and Glu144.

Its function is as follows. Potential calcium sensor. This is Putative calcium-binding protein CML23 (CML23) from Oryza sativa subsp. japonica (Rice).